A 772-amino-acid chain; its full sequence is MQPSVSDSSVYLSSAPTKPIASGSVATGIDSMPSKVDITPCDLLENSKSSAPLFVECNQESLHSIPGSLHLVPDASIERLIEKHGAVNLLRQLAKDVAERDSFISDLKFHFESREYVFRELLREHGLDPVLANTKLSQRHSASFFPSSQEPSIPENPSSLTGEKPHLYARIDSAINEPFTPSDRLSPSSLVPLLKLPALDHAVSSSSSSDLPSDPNSASYIASSKQKASSLKLTSSLKKFYSWTSSSSLQHTRENLHDSTSSLRDHDPSLLSSSKFFRSSPRCSTPSVSSTFVSATSEPEVETYSVSTKNSSSNKNLRSSLSKLLSTSNLNNKPLSLSSTAPSMPSIGSVELGNMIPKETQPPSMRNDWKDYLDNNSKEILDQFGFLQKRPSHDTPLCPEDIKLNQKQTLSFYESNYGLVDDFFGNELDGLNDSPLLLNKKDILLDMKESTRQKNWSLFFQRLYKKYKITDEDTIGLLGISSIGVKGRHGKKRWHKFRELVKNGVPLCYKAKVWLECSGAYQLHSPGYYEELLSRTDEVESASVAQIDMDINRTMAKNVFFGGKGPGIPKLRRILVAYSRHNPHIGYCQGMNVIGAFLLLLYASEEDAFYMLMSIIENVLPPKYFTPDLMTSRADQLVLKSFVKESLPEIYSHLELLGVDLDAISFHWFLSVYTDTLPTNISFRIFDMLFCDGYVCLFRVALTILKSLKQQILACNSSSAIYSFLSDLVQYSFQPDSFIKEAADRWSKLVTEKSIERKRNLAISSLNLAVNY.

The span at 143–161 (SFFPSSQEPSIPENPSSLT) shows a compositional bias: polar residues. Disordered stretches follow at residues 143–163 (SFFPSSQEPSIPENPSSLTGE) and 275–294 (KFFRSSPRCSTPSVSSTFVS). A compositionally biased stretch (low complexity) spans 275-291 (KFFRSSPRCSTPSVSST). Threonine 395 is subject to Phosphothreonine. In terms of domain architecture, Rab-GAP TBC spans 504 to 693 (GVPLCYKAKV…RIFDMLFCDG (190 aa)).

The polypeptide is TBC domain-containing protein C4G8.04 (Schizosaccharomyces pombe (strain 972 / ATCC 24843) (Fission yeast)).